Here is a 185-residue protein sequence, read N- to C-terminus: Ribosome-recycling factor (185 aa).

This sequence belongs to the RRF family.

It localises to the cytoplasm. In terms of biological role, responsible for the release of ribosomes from messenger RNA at the termination of protein biosynthesis. May increase the efficiency of translation by recycling ribosomes from one round of translation to another. The protein is Ribosome-recycling factor of Francisella philomiragia subsp. philomiragia (strain ATCC 25017 / CCUG 19701 / FSC 153 / O#319-036).